An 859-amino-acid polypeptide reads, in one-letter code: Low-density lipoprotein receptor-related protein 12 (859 aa).

Positions 1 to 32 are cleaved as a signal peptide; the sequence is MARRWSTKESPRWRSALLLLFLAGVYGNGALA. Over 33-492 the chain is Extracellular; sequence EHSENVHISG…ENCPVIVPTR (460 aa). Disulfide bonds link Cys47-Cys76 and Cys103-Cys122. Residues 47-159 form the CUB 1 domain; it reads CGETPEQIRA…KGFRLAYFSG (113 aa). An N-linked (GlcNAc...) asparagine glycan is attached at Asn75. A glycan (N-linked (GlcNAc...) asparagine) is linked at Asn146. LDL-receptor class A domains are found at residues 165-201 and 214-255; these read NCAC…EICA and PCAY…IDCD. 7 disulfides stabilise this stretch: Cys166–Cys178, Cys173–Cys191, Cys185–Cys200, Cys215–Cys232, Cys222–Cys245, Cys239–Cys254, and Cys259–Cys285. In terms of domain architecture, CUB 2 spans 259–372; that stretch reads CGQWLKYFYG…RGFNATYQVD (114 aa). N-linked (GlcNAc...) asparagine glycosylation is found at Asn284 and Asn366. LDL-receptor class A domains follow at residues 374–411, 412–449, and 450–486; these read FCLP…INCT, MCQK…KNCF, and FCQP…ENCP. 9 disulfide bridges follow: Cys375–Cys388, Cys382–Cys401, Cys395–Cys410, Cys413–Cys426, Cys420–Cys439, Cys433–Cys448, Cys451–Cys463, Cys458–Cys476, and Cys470–Cys485. Residue Asn409 is glycosylated (N-linked (GlcNAc...) asparagine). Asn441 carries an N-linked (GlcNAc...) asparagine glycan. Residues 493–513 form a helical membrane-spanning segment; that stretch reads VITAAVIGSLICGLLLVIALG. Topologically, residues 514 to 859 are cytoplasmic; sequence CTCKLYSLRM…TSDDEALLLC (346 aa). Disordered stretches follow at residues 623–678, 693–723, 748–770, and 802–823; these read ADGD…LPQK, ASSS…SPAR, SSVS…REDD, and QGQG…SNRD. 2 stretches are compositionally biased toward polar residues: residues 748–757 and 802–814; these read SSVSQNQSPL and QGQG…NATN.

Belongs to the LDLR family. As to quaternary structure, may interact with RACK1, ZFYVE9 and NMRK2.

The protein resides in the membrane. Its subcellular location is the coated pit. Probable receptor, which may be involved in the internalization of lipophilic molecules and/or signal transduction. May act as a tumor suppressor. In Pongo abelii (Sumatran orangutan), this protein is Low-density lipoprotein receptor-related protein 12 (LRP12).